Reading from the N-terminus, the 187-residue chain is Elongation factor P (187 aa).

The protein belongs to the elongation factor P family.

The protein localises to the cytoplasm. It participates in protein biosynthesis; polypeptide chain elongation. In terms of biological role, involved in peptide bond synthesis. Stimulates efficient translation and peptide-bond synthesis on native or reconstituted 70S ribosomes in vitro. Probably functions indirectly by altering the affinity of the ribosome for aminoacyl-tRNA, thus increasing their reactivity as acceptors for peptidyl transferase. This chain is Elongation factor P, found in Jannaschia sp. (strain CCS1).